The primary structure comprises 482 residues: E1B 55 kDa protein (482 aa).

The segment at 73-94 is disordered; the sequence is VLDSGEGPSCADDRDKQEKKES. A compositionally biased stretch (basic and acidic residues) spans 83–94; it reads ADDRDKQEKKES. Phosphoserine occurs at positions 476 and 477.

Belongs to the adenoviridae E1B 55 kDa protein family. Interacts with host PML-4 and PML-5; this interaction promotes efficient subnuclear targeting of E1B-55K to PML nuclear bodies. Interacts with E4-ORF3 protein. Interacts with E4-ORF6 protein.

It is found in the host nucleus. It localises to the host cytoplasm. Its function is as follows. Plays a major role to prevent cellular inhibition of viral genome replication. Assembles an SCF-like E3 ubiquitin ligase complex based on the cellular proteins ELOB, ELOC, CUL5 and RBX1, in cooperation with viral E4orf6. This viral RING-type ligase ubiquitinates cellular substrates and targets them to proteasomal degradation: TP53/p53, LIG4, MRE11-RAD50-NBS1 (MRN) complex, ITGA3, DAXX and BLM. E1B-55K probably acts as the substrate-specific adapter of the SCF-like E3 ubiquitin ligase complex. Degradation of host TP53/p53 activity is essential for preventing E1A-induced TP53 accumulation that would otherwise lead to cell apoptosis and growth arrest. E1B-55K also inactivates TP53 transcription-factor activity by binding its transactivation domain. E1B-55K also functions as a SUMO1 E3 ligase for TP53 which causes the latter to be sequestered in promyelocytic leukemia (PML) nuclear bodies thereby contributing to maximal inhibition of TP53 function. The chain is E1B 55 kDa protein from Homo sapiens (Human).